Reading from the N-terminus, the 299-residue chain is UDP-N-acetylenolpyruvoylglucosamine reductase (299 aa).

An FAD-binding PCMH-type domain is found at 28-193 (KVGGPADILA…LSAKFELQAG (166 aa)). Arg172 is an active-site residue. Catalysis depends on Ser222, which acts as the Proton donor. Glu292 is a catalytic residue.

The protein belongs to the MurB family. Requires FAD as cofactor.

Its subcellular location is the cytoplasm. The catalysed reaction is UDP-N-acetyl-alpha-D-muramate + NADP(+) = UDP-N-acetyl-3-O-(1-carboxyvinyl)-alpha-D-glucosamine + NADPH + H(+). It participates in cell wall biogenesis; peptidoglycan biosynthesis. Cell wall formation. The sequence is that of UDP-N-acetylenolpyruvoylglucosamine reductase from Lactococcus lactis subsp. cremoris (strain SK11).